The primary structure comprises 171 residues: Lipoprotein signal peptidase (171 aa).

Transmembrane regions (helical) follow at residues 8–28, 64–84, and 99–119; these read SFLWLSAVAFVVDLLTKYIVV, WQQYFFILLALAISGMLVYFL, and ALIIGGALANMVDRAYNGFVV. Residues Asp-120 and Asp-138 contribute to the active site. The chain crosses the membrane as a helical span at residues 133–153; that stretch reads VFNIADIAICIGAGLLALDAF.

It belongs to the peptidase A8 family.

It localises to the cell inner membrane. It carries out the reaction Release of signal peptides from bacterial membrane prolipoproteins. Hydrolyzes -Xaa-Yaa-Zaa-|-(S,diacylglyceryl)Cys-, in which Xaa is hydrophobic (preferably Leu), and Yaa (Ala or Ser) and Zaa (Gly or Ala) have small, neutral side chains.. It functions in the pathway protein modification; lipoprotein biosynthesis (signal peptide cleavage). In terms of biological role, this protein specifically catalyzes the removal of signal peptides from prolipoproteins. The chain is Lipoprotein signal peptidase from Haemophilus influenzae (strain PittGG).